The sequence spans 165 residues: Xanthine-guanine phosphoribosyltransferase (165 aa).

5-phospho-alpha-D-ribose 1-diphosphate contacts are provided by residues 41 to 42 (RG) and 98 to 106 (DDLTDTGKT). Mg(2+) is bound at residue Asp-99. Guanine contacts are provided by Asp-102 and Ile-145. Residues Asp-102 and Ile-145 each coordinate xanthine. GMP-binding positions include 102-106 (DTGKT) and 144-145 (WI).

This sequence belongs to the purine/pyrimidine phosphoribosyltransferase family. XGPT subfamily. As to quaternary structure, homotetramer. Requires Mg(2+) as cofactor.

The protein resides in the cell inner membrane. It carries out the reaction GMP + diphosphate = guanine + 5-phospho-alpha-D-ribose 1-diphosphate. It catalyses the reaction XMP + diphosphate = xanthine + 5-phospho-alpha-D-ribose 1-diphosphate. The catalysed reaction is IMP + diphosphate = hypoxanthine + 5-phospho-alpha-D-ribose 1-diphosphate. The protein operates within purine metabolism; GMP biosynthesis via salvage pathway; GMP from guanine: step 1/1. Its pathway is purine metabolism; XMP biosynthesis via salvage pathway; XMP from xanthine: step 1/1. Functionally, purine salvage pathway enzyme that catalyzes the transfer of the ribosyl-5-phosphate group from 5-phospho-alpha-D-ribose 1-diphosphate (PRPP) to the N9 position of the 6-oxopurines guanine and xanthine to form the corresponding ribonucleotides GMP (guanosine 5'-monophosphate) and XMP (xanthosine 5'-monophosphate), with the release of PPi. To a lesser extent, also acts on hypoxanthine. The sequence is that of Xanthine-guanine phosphoribosyltransferase from Sinorhizobium medicae (strain WSM419) (Ensifer medicae).